A 430-amino-acid polypeptide reads, in one-letter code: UDP-N-acetylmuramoylalanine--D-glutamate ligase (430 aa).

109–115 (GTDGKST) lines the ATP pocket.

The protein belongs to the MurCDEF family.

It localises to the cytoplasm. The catalysed reaction is UDP-N-acetyl-alpha-D-muramoyl-L-alanine + D-glutamate + ATP = UDP-N-acetyl-alpha-D-muramoyl-L-alanyl-D-glutamate + ADP + phosphate + H(+). Its pathway is cell wall biogenesis; peptidoglycan biosynthesis. In terms of biological role, cell wall formation. Catalyzes the addition of glutamate to the nucleotide precursor UDP-N-acetylmuramoyl-L-alanine (UMA). The chain is UDP-N-acetylmuramoylalanine--D-glutamate ligase from Thermotoga maritima (strain ATCC 43589 / DSM 3109 / JCM 10099 / NBRC 100826 / MSB8).